The chain runs to 95 residues: Co-chaperonin GroES (95 aa).

It belongs to the GroES chaperonin family. As to quaternary structure, heptamer of 7 subunits arranged in a ring. Interacts with the chaperonin GroEL.

The protein resides in the cytoplasm. Together with the chaperonin GroEL, plays an essential role in assisting protein folding. The GroEL-GroES system forms a nano-cage that allows encapsulation of the non-native substrate proteins and provides a physical environment optimized to promote and accelerate protein folding. GroES binds to the apical surface of the GroEL ring, thereby capping the opening of the GroEL channel. This chain is Co-chaperonin GroES, found in Vesicomyosocius okutanii subsp. Calyptogena okutanii (strain HA).